The sequence spans 206 residues: FMN-dependent NADH:quinone oxidoreductase (206 aa).

FMN is bound by residues 15–17, 94–97, and 138–141; these read SVS, MYNF, and TRGG.

This sequence belongs to the azoreductase type 1 family. In terms of assembly, homodimer. Requires FMN as cofactor.

The enzyme catalyses 2 a quinone + NADH + H(+) = 2 a 1,4-benzosemiquinone + NAD(+). It catalyses the reaction N,N-dimethyl-1,4-phenylenediamine + anthranilate + 2 NAD(+) = 2-(4-dimethylaminophenyl)diazenylbenzoate + 2 NADH + 2 H(+). Quinone reductase that provides resistance to thiol-specific stress caused by electrophilic quinones. In terms of biological role, also exhibits azoreductase activity. Catalyzes the reductive cleavage of the azo bond in aromatic azo compounds to the corresponding amines. This is FMN-dependent NADH:quinone oxidoreductase from Sinorhizobium fredii (strain NBRC 101917 / NGR234).